A 583-amino-acid polypeptide reads, in one-letter code: Fumarate reductase flavoprotein subunit (583 aa).

FAD is bound by residues glycine 11–alanine 15, valine 35–lysine 37, serine 43–glycine 51, tryptophan 155–alanine 157, and aspartate 211. Histidine 44 is subject to Tele-8alpha-FAD histidine. Residues histidine 232 and arginine 248 contribute to the active site. Residues histidine 353–tyrosine 354, glutamate 377, and arginine 388–leucine 394 contribute to the FAD site.

The protein belongs to the FAD-dependent oxidoreductase 2 family. FRD/SDH subfamily. In terms of assembly, part of an enzyme complex containing four subunits: a flavoprotein (FrdA), an iron-sulfur protein (FrdB), and two hydrophobic anchor proteins (FrdC and FrdD). It depends on FAD as a cofactor.

The protein resides in the cell membrane. It carries out the reaction a quinone + succinate = fumarate + a quinol. The catalysed reaction is a menaquinone + succinate = a menaquinol + fumarate. The polypeptide is Fumarate reductase flavoprotein subunit (frdA) (Mycobacterium tuberculosis (strain CDC 1551 / Oshkosh)).